A 168-amino-acid polypeptide reads, in one-letter code: Heat shock protein beta-9 (168 aa).

The span at 1 to 12 (MQRVGSSFSTGQ) shows a compositional bias: polar residues. Disordered regions lie at residues 1-25 (MQRV…SRCP), 83-104 (TGQR…EQSV), and 129-168 (LWLR…VKNP). Residues 38 to 151 (LPVRLLRDEV…EAQTGQSQKP (114 aa)) form the sHSP domain. The span at 86–104 (RQHESNDPSRGRYRMEQSV) shows a compositional bias: basic and acidic residues. Residues 158-168 (SSLQNESVKNP) are compositionally biased toward polar residues.

Belongs to the small heat shock protein (HSP20) family. As to expression, testis specific.

It localises to the cytoplasm. The protein localises to the nucleus. In Mus musculus (Mouse), this protein is Heat shock protein beta-9 (Hspb9).